We begin with the raw amino-acid sequence, 450 residues long: MKNSLSLDLTKTKPYVEEHEIQYLESIIREMDNTLGKKTGPGNKFLGWMDLPINYNKEEFARIKKAAEKIKNTCDVFIVIGIGGSYLGSRAAIEMISNTFYNNLDKSQRKVPQIYFAGNNISSTYMADLLELVKDKDICVNVISKSGTTTEPAIAFRIFKELLENKYGKEGAKERIFATTDAAKGALRTLADSEGYETFVIPDDVGGRFSVLTPVGLLPIAASGIDIDEMMKGAADARQEYSSDNIEKNHVYRYVAVRNALYRKGKTTEMLVNFEPCLHYFGEWWKQLYGESEGKDGKGIFPAAADFSTDLHSMGQYIQEGLRNIFETFINVENPRKSIMIKEDKENLDGLNFLAEKDMDYVNHQALRGTVLAHNDGGVPAIVLNVPELSAYYFGQLVYFFEKACGISGYLQGVNPFDQPGVEAYKKNMFALLGKPGHEDMKATLEERLK.

Glu291 acts as the Proton donor in catalysis. Active-site residues include His312 and Lys426.

This sequence belongs to the GPI family.

Its subcellular location is the cytoplasm. It catalyses the reaction alpha-D-glucose 6-phosphate = beta-D-fructose 6-phosphate. It participates in carbohydrate biosynthesis; gluconeogenesis. It functions in the pathway carbohydrate degradation; glycolysis; D-glyceraldehyde 3-phosphate and glycerone phosphate from D-glucose: step 2/4. Functionally, catalyzes the reversible isomerization of glucose-6-phosphate to fructose-6-phosphate. The protein is Glucose-6-phosphate isomerase of Clostridium botulinum (strain Loch Maree / Type A3).